We begin with the raw amino-acid sequence, 186 residues long: Napin embryo-specific (186 aa).

A signal peptide spans 1 to 21 (MANKLFLVSATLALFFLLTNA). 2 consecutive propeptides follow at residues 22–38 (SVYRTVVEVDEDDATNP) and 77–97 (PSWTLDGEFDFEDDVENQQQG).

Belongs to the 2S seed storage albumins family. As to quaternary structure, the mature protein consists of a small and a large chain linked by disulfide bonds. Cotyledons and the axis.

The small, basic, water-soluble napins are one of the two major kinds of storage proteins synthesized in the seed during its maturation. In Brassica napus (Rape), this protein is Napin embryo-specific.